Consider the following 122-residue polypeptide: Histone H2B 1 (122 aa).

Positions 1 to 30 are disordered; that stretch reads MPPKPSAKGAKKAAKTVTKPKDGKKRRHAR. S109 carries an O-linked (GlcNAc) serine glycan. K117 is covalently cross-linked (Glycyl lysine isopeptide (Lys-Gly) (interchain with G-Cter in ubiquitin)).

It belongs to the histone H2B family. In terms of assembly, the nucleosome is a histone octamer containing two molecules each of H2A, H2B, H3 and H4 assembled in one H3-H4 heterotetramer and two H2A-H2B heterodimers. The octamer wraps approximately 147 bp of DNA. In terms of processing, monoubiquitination of Lys-117 gives a specific tag for epigenetic transcriptional activation and is also prerequisite for histone H3 'Lys-4' and 'Lys-79' methylation. Post-translationally, glcNAcylation at Ser-109 promotes monoubiquitination of Lys-117. It fluctuates in response to extracellular glucose, and associates with transcribed genes.

Its subcellular location is the nucleus. The protein localises to the chromosome. In terms of biological role, core component of nucleosome. Nucleosomes wrap and compact DNA into chromatin, limiting DNA accessibility to the cellular machineries which require DNA as a template. Histones thereby play a central role in transcription regulation, DNA repair, DNA replication and chromosomal stability. DNA accessibility is regulated via a complex set of post-translational modifications of histones, also called histone code, and nucleosome remodeling. The sequence is that of Histone H2B 1 (his-11) from Caenorhabditis elegans.